Reading from the N-terminus, the 217-residue chain is Ras-related protein RABA2c (217 aa).

GTP-binding positions include 19–27 (GDSGVGKSN), 38–44 (CLESKST), 67–71 (DTAGQ), 125–128 (NKSD), and 155–157 (SAL). Positions 41–49 (SKSTIGVEF) match the Effector region motif. Positions 195 to 217 (PGQGTTINVDDTSGGAKRACCSS) are disordered. 2 S-geranylgeranyl cysteine lipidation sites follow: cysteine 214 and cysteine 215.

It belongs to the small GTPase superfamily. Rab family. Expressed in root tips.

It is found in the endosome membrane. It localises to the golgi apparatus. The protein resides in the trans-Golgi network membrane. In terms of biological role, intracellular vesicle trafficking and protein transport. The chain is Ras-related protein RABA2c (RABA2C) from Arabidopsis thaliana (Mouse-ear cress).